The following is a 345-amino-acid chain: Phosphoribosylformylglycinamidine cyclo-ligase (345 aa).

It belongs to the AIR synthase family.

Its subcellular location is the cytoplasm. It catalyses the reaction 2-formamido-N(1)-(5-O-phospho-beta-D-ribosyl)acetamidine + ATP = 5-amino-1-(5-phospho-beta-D-ribosyl)imidazole + ADP + phosphate + H(+). It functions in the pathway purine metabolism; IMP biosynthesis via de novo pathway; 5-amino-1-(5-phospho-D-ribosyl)imidazole from N(2)-formyl-N(1)-(5-phospho-D-ribosyl)glycinamide: step 2/2. The chain is Phosphoribosylformylglycinamidine cyclo-ligase from Salmonella choleraesuis (strain SC-B67).